The following is a 378-amino-acid chain: Long-chain-fatty-acid--luciferin-component ligase (378 aa).

It belongs to the LuxE family.

It catalyses the reaction a long-chain fatty acid + L-cysteinyl-[protein] + ATP = an S-(long-chain fatty acyl)-L-cysteinyl-[protein] + AMP + diphosphate. The protein operates within lipid metabolism; fatty acid reduction for biolumincescence. Its function is as follows. Acyl-protein synthetase activates tetradecanoic acid. It is a component of the fatty acid reductase complex responsible for converting tetradecanoic acid to the aldehyde which serves as substrate in the luciferase-catalyzed reaction. In Aliivibrio fischeri (Vibrio fischeri), this protein is Long-chain-fatty-acid--luciferin-component ligase.